The following is a 240-amino-acid chain: Small ribosomal subunit protein eS4 (240 aa).

Positions 37-99 constitute an S4 RNA-binding domain; sequence VPLVVLLRDV…RGEFFRVFPD (63 aa).

Belongs to the eukaryotic ribosomal protein eS4 family.

This chain is Small ribosomal subunit protein eS4, found in Halorubrum lacusprofundi (strain ATCC 49239 / DSM 5036 / JCM 8891 / ACAM 34).